A 421-amino-acid polypeptide reads, in one-letter code: Protein ECERIFERUM 2 (421 aa).

An N-acetylmethionine modification is found at Met1.

The protein belongs to the plant acyltransferase family. In terms of tissue distribution, expressed at high levels in the epidermis of stems and young siliques. Expressed in flowers.

It localises to the endoplasmic reticulum. The protein localises to the nucleus. Its function is as follows. Involved in biosynthesis of the epicuticular wax. Plays a role in very-long-chain fatty acid (VLCFA) biosynthesis and is required for C28 fatty acid elongation in stem. Despite its classification as a BAHD acyltransferase based on sequence homology, CER2 does not seem to share the catalytic mechanism of the members of the BAHD family. In Arabidopsis thaliana (Mouse-ear cress), this protein is Protein ECERIFERUM 2 (CER2).